The sequence spans 125 residues: Oxytocin-neurophysin 1 (125 aa).

The first 19 residues, 1 to 19 (MAGPSLACCLLGLLALTSA), serve as a signal peptide directing secretion. Residues cysteine 20 and cysteine 25 are joined by a disulfide bond. Glycine 28 bears the Glycine amide mark. Disulfide bonds link cysteine 41/cysteine 85, cysteine 44/cysteine 58, cysteine 52/cysteine 75, cysteine 59/cysteine 65, cysteine 92/cysteine 104, cysteine 98/cysteine 116, and cysteine 105/cysteine 110.

Belongs to the vasopressin/oxytocin family. Interacts with oxytocin receptor (Ki=1.5 nM). Interacts with vasopressin V1aR/AVPR1A (Ki=37 nM), V1bR/AVPR1B (Ki=222 nM), and V2R/AVPR2 receptors (Ki=823 nM).

Its function is as follows. Neurophysin 1 specifically binds oxytocin. Functionally, oxytocin causes contraction of the smooth muscle of the uterus and of the mammary gland. Acts by binding to oxytocin receptor (OXTR). This is Oxytocin-neurophysin 1 (OXT) from Sus scrofa (Pig).